The following is a 103-amino-acid chain: Large ribosomal subunit protein bL21 (103 aa).

This sequence belongs to the bacterial ribosomal protein bL21 family. Part of the 50S ribosomal subunit. Contacts protein L20.

This protein binds to 23S rRNA in the presence of protein L20. This chain is Large ribosomal subunit protein bL21, found in Klebsiella pneumoniae (strain 342).